A 168-amino-acid chain; its full sequence is DAZ-associated protein 2 (168 aa).

Residues 1-13 (MNSKGQYPTQPTY) show a composition bias toward low complexity. A disordered region spans residues 1–25 (MNSKGQYPTQPTYPVQPPGNPVYPQ). Residues 39–42 (PPAY) carry the PPAY motif. Ser-77 is subject to Phosphoserine.

As to quaternary structure, interacts with SOX6. Interacts with DAZ1 and DAZL. Interacts with IL17RB. May interact with FAM168B. Interacts with INCA1. Interacts with EIF4G1 and EIF4G2. Interacts (via PPAY motif) with NEDD4 (via WW domains). Interacts with transcription factor TCF4; the interaction results in localization of DAZAP2 to the nucleus. Interacts with transcription factors TCF7 and TCF7L1. Interacts with transcription factor LEF1. Interacts with serine/threonine-protein kinase HIPK2; the interaction results in phosphorylation of DAZAP2 which causes localization of DAZAP2 to the nucleus, reduces interaction of DAZAP2 with HIPK2 and prevents DAZAP2-dependent degradation of HIPK2. Interacts with ubiquitin ligase SIAH1; the interaction is decreased following phosphorylation of DAZAP2 by HIPK2. Interacts with TP53; the interaction is triggered by DNA damage. Post-translationally, ubiquitinated by SMURF2, leading to proteasomal degradation. Ubiquitinated by NEDD4, leading to proteasomal degradation. Following DNA damage, phosphorylated by HIPK2 which promotes DAZAP2 localization to the nucleus, reduces interaction of DAZAP2 with HIPK2 and SIAH1, and prevents DAZAP2-dependent ubiquitination of HIPK2 by E3 ubiquitin-protein ligase SIAH1 and subsequent HIPK2 proteasomal degradation.

It is found in the cytoplasm. Its subcellular location is the nucleus. The protein localises to the nucleus speckle. It localises to the nuclear body. The protein resides in the stress granule. In terms of biological role, in unstressed cells, promotes SIAH1-mediated polyubiquitination and degradation of the serine/threonine-protein kinase HIPK2, probably by acting as a loading factor that potentiates complex formation between HIPK2 and ubiquitin ligase SIAH1. In response to DNA damage, localizes to the nucleus following phosphorylation by HIPK2 and modulates the expression of a subset of TP53/p53 target genes by binding to TP53 at target gene promoters. This limits the expression of a number of cell death-mediating TP53 target genes, reducing DNA damage-induced cell death. Enhances the binding of transcription factor TCF7L2/TCF4, a Wnt signaling pathway effector, to the promoters of target genes. Plays a role in stress granule formation. This Bos taurus (Bovine) protein is DAZ-associated protein 2.